Here is a 156-residue protein sequence, read N- to C-terminus: S-ribosylhomocysteine lyase (156 aa).

Fe cation is bound by residues H56, H60, and C123.

The protein belongs to the LuxS family. In terms of assembly, homodimer. It depends on Fe cation as a cofactor.

The catalysed reaction is S-(5-deoxy-D-ribos-5-yl)-L-homocysteine = (S)-4,5-dihydroxypentane-2,3-dione + L-homocysteine. Involved in the synthesis of autoinducer 2 (AI-2) which is secreted by bacteria and is used to communicate both the cell density and the metabolic potential of the environment. The regulation of gene expression in response to changes in cell density is called quorum sensing. Catalyzes the transformation of S-ribosylhomocysteine (RHC) to homocysteine (HC) and 4,5-dihydroxy-2,3-pentadione (DPD). This Staphylococcus haemolyticus (strain JCSC1435) protein is S-ribosylhomocysteine lyase.